The following is a 515-amino-acid chain: Probable malate:quinone oxidoreductase (515 aa).

This sequence belongs to the MQO family. Requires FAD as cofactor.

It catalyses the reaction (S)-malate + a quinone = a quinol + oxaloacetate. It functions in the pathway carbohydrate metabolism; tricarboxylic acid cycle; oxaloacetate from (S)-malate (quinone route): step 1/1. The chain is Probable malate:quinone oxidoreductase from Blochmanniella pennsylvanica (strain BPEN).